Reading from the N-terminus, the 123-residue chain is Large ribosomal subunit protein bL12 (123 aa).

Belongs to the bacterial ribosomal protein bL12 family. As to quaternary structure, homodimer. Part of the ribosomal stalk of the 50S ribosomal subunit. Forms a multimeric L10(L12)X complex, where L10 forms an elongated spine to which 2 to 4 L12 dimers bind in a sequential fashion. Binds GTP-bound translation factors.

In terms of biological role, forms part of the ribosomal stalk which helps the ribosome interact with GTP-bound translation factors. Is thus essential for accurate translation. This is Large ribosomal subunit protein bL12 from Shewanella sp. (strain ANA-3).